We begin with the raw amino-acid sequence, 416 residues long: Multifunctional CCA protein (416 aa).

2 residues coordinate ATP: Gly8 and Arg11. 2 residues coordinate CTP: Gly8 and Arg11. Mg(2+)-binding residues include Asp21 and Asp23. Residues Arg91, Arg138, and Arg141 each coordinate ATP. Positions 91, 138, and 141 each coordinate CTP. The HD domain occupies Thr229–Phe331.

The protein belongs to the tRNA nucleotidyltransferase/poly(A) polymerase family. Bacterial CCA-adding enzyme type 1 subfamily. As to quaternary structure, monomer. Can also form homodimers and oligomers. It depends on Mg(2+) as a cofactor. Ni(2+) serves as cofactor.

It catalyses the reaction a tRNA precursor + 2 CTP + ATP = a tRNA with a 3' CCA end + 3 diphosphate. It carries out the reaction a tRNA with a 3' CCA end + 2 CTP + ATP = a tRNA with a 3' CCACCA end + 3 diphosphate. In terms of biological role, catalyzes the addition and repair of the essential 3'-terminal CCA sequence in tRNAs without using a nucleic acid template. Adds these three nucleotides in the order of C, C, and A to the tRNA nucleotide-73, using CTP and ATP as substrates and producing inorganic pyrophosphate. tRNA 3'-terminal CCA addition is required both for tRNA processing and repair. Also involved in tRNA surveillance by mediating tandem CCA addition to generate a CCACCA at the 3' terminus of unstable tRNAs. While stable tRNAs receive only 3'-terminal CCA, unstable tRNAs are marked with CCACCA and rapidly degraded. The sequence is that of Multifunctional CCA protein from Xylella fastidiosa (strain 9a5c).